Consider the following 332-residue polypeptide: Cytochrome c oxidase subunit 2 (332 aa).

An N-terminal signal peptide occupies residues 1-20 (MKIPGSVITLLIGVVITVVS). 2 consecutive transmembrane segments (helical) span residues 48–68 (MMTIATGLFLLVEGVLVYCLI) and 87–107 (VPLEILWTAIPTVIVFTLAVY). The Cu cation site is built by histidine 214, cysteine 249, cysteine 253, and histidine 257.

Belongs to the cytochrome c oxidase subunit 2 family. The cofactor is Cu cation.

It localises to the cell membrane. The enzyme catalyses 4 Fe(II)-[cytochrome c] + O2 + 8 H(+)(in) = 4 Fe(III)-[cytochrome c] + 2 H2O + 4 H(+)(out). Functionally, subunits I and II form the functional core of the enzyme complex. Electrons originating in cytochrome c are transferred via heme a and Cu(A) to the binuclear center formed by heme a3 and Cu(B). This Synechocystis sp. (strain ATCC 27184 / PCC 6803 / Kazusa) protein is Cytochrome c oxidase subunit 2 (ctaC).